A 211-amino-acid polypeptide reads, in one-letter code: Pyridoxine/pyridoxamine 5'-phosphate oxidase (211 aa).

Residues 7-10 (RREY) and K65 each bind substrate. FMN-binding positions include 60–65 (RIVLLK), 75–76 (YT), R81, K82, and Q104. Y122, R126, and S130 together coordinate substrate. FMN contacts are provided by residues 139–140 (QS) and W184. 190–192 (RLH) serves as a coordination point for substrate. An FMN-binding site is contributed by R194.

It belongs to the pyridoxamine 5'-phosphate oxidase family. Homodimer. It depends on FMN as a cofactor.

The catalysed reaction is pyridoxamine 5'-phosphate + O2 + H2O = pyridoxal 5'-phosphate + H2O2 + NH4(+). It carries out the reaction pyridoxine 5'-phosphate + O2 = pyridoxal 5'-phosphate + H2O2. Its pathway is cofactor metabolism; pyridoxal 5'-phosphate salvage; pyridoxal 5'-phosphate from pyridoxamine 5'-phosphate: step 1/1. The protein operates within cofactor metabolism; pyridoxal 5'-phosphate salvage; pyridoxal 5'-phosphate from pyridoxine 5'-phosphate: step 1/1. Its function is as follows. Catalyzes the oxidation of either pyridoxine 5'-phosphate (PNP) or pyridoxamine 5'-phosphate (PMP) into pyridoxal 5'-phosphate (PLP). This chain is Pyridoxine/pyridoxamine 5'-phosphate oxidase, found in Vibrio vulnificus (strain CMCP6).